The chain runs to 365 residues: MKFFNREKEINEILLILEEEPNNIYFIYGPLNSGKSTLIREVITNRLDKSKYIPFFIDFRTRNILNVDNFIECLFEVDEKSKIDDFREYAKSLADLLVKGSEEISKYYLGMPIKVPKPFFDRIFSKRDKSADVYQYIEYLFAKLNEKGKKPILIFDELQMIREITLNGNRLLLWSLFQFLVALTKVQHLCHVFCLSSDSLFIEYIYGKAELKGGVDYILVDDFDKKTALKFMDFLAKQKNINLTNEDKELIYSYVGGKAKYIYDVIVKLKAVKDLKYILETKLEEERNHLEELLEKVEEDYEGINYDEVLEALKLFKDNYELPKSKIKRKIRIFLIKENILFLNPQKGTLKPQSYLVWNAIKRML.

29 to 36 contributes to the ATP binding site; it reads GPLNSGKS.

Belongs to the archaeal ATPase family.

This is an uncharacterized protein from Methanocaldococcus jannaschii (strain ATCC 43067 / DSM 2661 / JAL-1 / JCM 10045 / NBRC 100440) (Methanococcus jannaschii).